The chain runs to 442 residues: UDP-N-acetylglucosamine--peptide N-acetylglucosaminyltransferase stabilizing protein GtfB (442 aa).

Belongs to the GtfB family. In terms of assembly, interacts with glycosyltransferase GtfA (Gtf1). Interacts with glycosyltransferase GtfA; probably forms a heterotetramer with 2 subunits each of GtfA and GtfB. Part of the accessory SecA2/SecY2 protein translocation apparatus.

Its subcellular location is the cell membrane. Its pathway is protein modification; protein glycosylation. Functionally, required for the polymorphic O-glycosylation of the serine-rich repeat protein Srr2. A stabilizing protein that is part of the accessory SecA2/SecY2 system specifically required to export serine-rich repeat proteins, probably Srr2 in this organism. The GtfA-GtfB (Gtf1-Gtf2 in this bacteria) complex adds GlcNAc from UDP-GlcNAc to Srr2 substrate, attaching the first sugar residue. Stabilizes the glycosylation activity of GtfA in vivo. Upon expression in a gtfB deletion mutant of S.parasanguis, GtfB confers incorrect glycosylation and partial complementation of a biofilm formation defect, while GtfA/GtfB restores correct expression of serine-rich repeat protein Fap1 and completely restores a biofilm formation defect in a S.parasanguis double gtfA-gtfB deletion. This is UDP-N-acetylglucosamine--peptide N-acetylglucosaminyltransferase stabilizing protein GtfB from Streptococcus agalactiae.